The primary structure comprises 491 residues: Alpha-2-antiplasmin (491 aa).

The first 27 residues, 1–27, serve as a signal peptide directing secretion; that stretch reads MALLRGLLVLSLSCLQGPCFTFSPVSA. Residues 28–39 constitute a propeptide that is removed on maturation; that stretch reads VDLPGQQPVSEQ. Cysteines 70 and 143 form a disulfide. N-linked (GlcNAc...) asparagine glycans are attached at residues asparagine 126, asparagine 295, asparagine 309, and asparagine 316. Residues 439–491 form a disordered region; the sequence is SALPQLQEQRDSPDNRLIGQNDKADFHGGKTFGPDLKLAPRMEEDYPQFSSPK. The residue at position 484 (tyrosine 484) is a Sulfotyrosine.

It belongs to the serpin family. In terms of assembly, forms protease inhibiting heterodimer with TMPRSS7. Proteolytically cleaved at Pro-35 by both the prolyl endopeptidase FAP form and antiplasmin-cleaving enzyme FAP soluble form to generate mature alpha-2-antiplasmin. Expressed by the liver and secreted in plasma.

Its subcellular location is the secreted. Its function is as follows. Serine protease inhibitor. The major targets of this inhibitor are plasmin and trypsin, but it also inactivates matriptase-3/TMPRSS7 and chymotrypsin. The polypeptide is Alpha-2-antiplasmin (Serpinf2) (Mus musculus (Mouse)).